We begin with the raw amino-acid sequence, 91 residues long: Large ribosomal subunit protein bL27 (91 aa).

Positions 1–13 (MATKKSGGSSCNG) are enriched in polar residues. Positions 1-20 (MATKKSGGSSCNGRDSRGRR) are disordered.

It belongs to the bacterial ribosomal protein bL27 family.

The polypeptide is Large ribosomal subunit protein bL27 (Anaplasma phagocytophilum (strain HZ)).